Consider the following 71-residue polypeptide: Ribosome modulation factor (71 aa).

The protein belongs to the ribosome modulation factor family.

The protein localises to the cytoplasm. Functionally, during stationary phase, converts 70S ribosomes to an inactive dimeric form (100S ribosomes). In Pseudomonas savastanoi pv. phaseolicola (strain 1448A / Race 6) (Pseudomonas syringae pv. phaseolicola (strain 1448A / Race 6)), this protein is Ribosome modulation factor.